Consider the following 191-residue polypeptide: Decorin-binding protein A (191 aa).

Positions Met-1–Gly-29 are cleaved as a signal peptide.

It belongs to the decorin-binding protein family.

In terms of biological role, binds to decorin which may mediate the adherence of B.burgdorferi to collagen fibers in skin and other tissues. The polypeptide is Decorin-binding protein A (dbpA) (Borreliella burgdorferi (strain ATCC 35210 / DSM 4680 / CIP 102532 / B31) (Borrelia burgdorferi)).